A 371-amino-acid chain; its full sequence is tRNA-specific 2-thiouridylase MnmA (371 aa).

Residues 13–20 (GMSGGVDS) and methionine 39 contribute to the ATP site. The interval 99–101 (NPD) is interaction with target base in tRNA. Catalysis depends on cysteine 104, which acts as the Nucleophile. Cysteine 104 and cysteine 200 form a disulfide bridge. Glycine 128 is an ATP binding site. The interaction with tRNA stretch occupies residues 150–152 (KDQ). Cysteine 200 serves as the catalytic Cysteine persulfide intermediate. The interval 308-309 (RY) is interaction with tRNA.

The protein belongs to the MnmA/TRMU family.

Its subcellular location is the cytoplasm. It carries out the reaction S-sulfanyl-L-cysteinyl-[protein] + uridine(34) in tRNA + AH2 + ATP = 2-thiouridine(34) in tRNA + L-cysteinyl-[protein] + A + AMP + diphosphate + H(+). In terms of biological role, catalyzes the 2-thiolation of uridine at the wobble position (U34) of tRNA, leading to the formation of s(2)U34. This chain is tRNA-specific 2-thiouridylase MnmA, found in Listeria monocytogenes serotype 4b (strain CLIP80459).